Reading from the N-terminus, the 123-residue chain is Large ribosomal subunit protein uL24 (123 aa).

Residues 100–123 are disordered; the sequence is RRPDGSTYKAERSVRISRKTGKEI.

The protein belongs to the universal ribosomal protein uL24 family. Part of the 50S ribosomal subunit.

Functionally, one of two assembly initiator proteins, it binds directly to the 5'-end of the 23S rRNA, where it nucleates assembly of the 50S subunit. One of the proteins that surrounds the polypeptide exit tunnel on the outside of the subunit. This Nocardioides sp. (strain ATCC BAA-499 / JS614) protein is Large ribosomal subunit protein uL24.